Here is a 232-residue protein sequence, read N- to C-terminus: Large ribosomal subunit protein uL1 (232 aa).

Belongs to the universal ribosomal protein uL1 family. In terms of assembly, part of the 50S ribosomal subunit.

Its function is as follows. Binds directly to 23S rRNA. The L1 stalk is quite mobile in the ribosome, and is involved in E site tRNA release. Functionally, protein L1 is also a translational repressor protein, it controls the translation of the L11 operon by binding to its mRNA. The sequence is that of Large ribosomal subunit protein uL1 from Thermosipho melanesiensis (strain DSM 12029 / CIP 104789 / BI429).